We begin with the raw amino-acid sequence, 557 residues long: ABC1 family protein MCP2 homolog (557 aa).

The transit peptide at 1–33 (MFSRFSWPRITRCFRSYPKKKSSCISFTHHARE) directs the protein to the mitochondrion. The Mitochondrial matrix segment spans residues 34-39 (HTNFKK). A helical membrane pass occupies residues 40-56 (PAVVGASITLMASVALV). Topologically, residues 57–557 (DFDPVKHAGV…NYFYYKHMYL (501 aa)) are mitochondrial intermembrane.

Belongs to the protein kinase superfamily. ADCK protein kinase family.

It localises to the mitochondrion inner membrane. Its function is as follows. Involved in mitochondrial lipid homeostasis. The polypeptide is ABC1 family protein MCP2 homolog (Schizosaccharomyces pombe (strain 972 / ATCC 24843) (Fission yeast)).